Here is a 755-residue protein sequence, read N- to C-terminus: Xaa-Pro dipeptidyl-peptidase (755 aa).

Active-site charge relay system residues include S348, D468, and H498.

This sequence belongs to the peptidase S15 family. Homodimer.

Its subcellular location is the cytoplasm. The catalysed reaction is Hydrolyzes Xaa-Pro-|- bonds to release unblocked, N-terminal dipeptides from substrates including Ala-Pro-|-p-nitroanilide and (sequentially) Tyr-Pro-|-Phe-Pro-|-Gly-Pro-|-Ile.. In terms of biological role, removes N-terminal dipeptides sequentially from polypeptides having unsubstituted N-termini provided that the penultimate residue is proline. The polypeptide is Xaa-Pro dipeptidyl-peptidase (Streptococcus thermophilus).